The following is a 226-amino-acid chain: Large ribosomal subunit protein mL67 (226 aa).

The protein belongs to the mitochondrion-specific ribosomal protein mL67 family. Component of the mitochondrial large ribosomal subunit (mt-LSU). Mature yeast 74S mitochondrial ribosomes consist of a small (37S) and a large (54S) subunit. The 37S small subunit contains a 15S ribosomal RNA (15S mt-rRNA) and 34 different proteins. The 54S large subunit contains a 21S rRNA (21S mt-rRNA) and 46 different proteins.

It is found in the nucleus. The protein localises to the mitochondrion. Component of the mitochondrial ribosome (mitoribosome), a dedicated translation machinery responsible for the synthesis of mitochondrial genome-encoded proteins, including at least some of the essential transmembrane subunits of the mitochondrial respiratory chain. The mitoribosomes are attached to the mitochondrial inner membrane and translation products are cotranslationally integrated into the membrane. mL67/MHR1 also has extraribosomal functions, being involved in regulation of mitochondrial DNA recombination, maintenance and repair, and generation of homoplasmic cells. mL67/MHR1 also acts as transcription factor involved in regulation of RNA polymerase II-dependent transcription. In Saccharomyces cerevisiae (strain ATCC 204508 / S288c) (Baker's yeast), this protein is Large ribosomal subunit protein mL67 (MHR1).